The chain runs to 189 residues: Interferon alpha-21 (189 aa).

The first 23 residues, 1–23 (MALSFSLLMAVLVLSYKSICSLG), serve as a signal peptide directing secretion. Intrachain disulfides connect cysteine 24–cysteine 122 and cysteine 52–cysteine 162.

Belongs to the alpha/beta interferon family.

Its subcellular location is the secreted. Its function is as follows. Produced by macrophages, IFN-alpha have antiviral activities. Interferon stimulates the production of two enzymes: a protein kinase and an oligoadenylate synthetase. This chain is Interferon alpha-21 (IFNA21), found in Homo sapiens (Human).